A 276-amino-acid polypeptide reads, in one-letter code: MAVRKLKPTSPGRRFQTVSDFEEITRSTPEKSLVIGLTKKSGRNNNGRVTSRRRGGGHKRLYRIIDFRRDKAGIPAKVAHIEYDPNRTARIALLHYADGEKRYILAPVGIRQGDMILSGEGADIKPGNALPMSRIPVGTNLHNIELQPGRGGQFCRAAGTYAQLVAKEGKYALLRLPSGEVRKVLAACCATVGQVGNVNHENISLGKAGRARWLGNRPKVRGVAMNPIDHPLGGGEGRSSGGRHPVSPWGMPTKGYKTRDRKKASSKLIIKRRGQK.

Residues 222–276 (GVAMNPIDHPLGGGEGRSSGGRHPVSPWGMPTKGYKTRDRKKASSKLIIKRRGQK) form a disordered region. The span at 259–276 (RDRKKASSKLIIKRRGQK) shows a compositional bias: basic residues.

The protein belongs to the universal ribosomal protein uL2 family. In terms of assembly, part of the 50S ribosomal subunit. Forms a bridge to the 30S subunit in the 70S ribosome.

Functionally, one of the primary rRNA binding proteins. Required for association of the 30S and 50S subunits to form the 70S ribosome, for tRNA binding and peptide bond formation. It has been suggested to have peptidyltransferase activity; this is somewhat controversial. Makes several contacts with the 16S rRNA in the 70S ribosome. The protein is Large ribosomal subunit protein uL2 of Nitratidesulfovibrio vulgaris (strain ATCC 29579 / DSM 644 / CCUG 34227 / NCIMB 8303 / VKM B-1760 / Hildenborough) (Desulfovibrio vulgaris).